The sequence spans 323 residues: tRNA dimethylallyltransferase (323 aa).

18–25 (GPTASGKT) contacts ATP. A substrate-binding site is contributed by 20–25 (TASGKT). An interaction with substrate tRNA region spans residues 44–47 (DSAL).

It belongs to the IPP transferase family. In terms of assembly, monomer. Mg(2+) serves as cofactor.

It carries out the reaction adenosine(37) in tRNA + dimethylallyl diphosphate = N(6)-dimethylallyladenosine(37) in tRNA + diphosphate. Catalyzes the transfer of a dimethylallyl group onto the adenine at position 37 in tRNAs that read codons beginning with uridine, leading to the formation of N6-(dimethylallyl)adenosine (i(6)A). The polypeptide is tRNA dimethylallyltransferase (Blochmanniella floridana).